We begin with the raw amino-acid sequence, 317 residues long: Melanocyte-stimulating hormone receptor (317 aa).

Topologically, residues 1–37 are extracellular; that stretch reads MPMQGAQRRLLGSLNSTPTATPNLGLAANHTGAPCLE. N-linked (GlcNAc...) asparagine glycosylation occurs at asparagine 29. Residues 38–63 traverse the membrane as a helical segment; sequence VSIPDGLFLSLGLVSLVENVLVVAAI. The Cytoplasmic portion of the chain corresponds to 64–72; it reads AKNRNLHSP. The chain crosses the membrane as a helical span at residues 73-93; sequence MYCFICCLALSDLLVSGSNML. Residues 94–118 are Extracellular-facing; sequence EMAVILLLEAGALATRASVVQQLQN. Residues 119 to 140 form a helical membrane-spanning segment; it reads TIDVLTCSSMLCSLCFLGAIAV. Residues 141–163 lie on the Cytoplasmic side of the membrane; sequence DRYVSIFYALRYHSIVTLPRARR. Residues 164–183 form a helical membrane-spanning segment; it reads AIAAIWVASVLSSTLFIAYC. Residues 184–191 are Extracellular-facing; that stretch reads DHAAVLLC. The helical transmembrane segment at 192-211 threads the bilayer; the sequence is LVVFFLAMLVLMAVLYVHML. Residues 212-240 lie on the Cytoplasmic side of the membrane; the sequence is ARACQHAQGITRLHKRQLPAHQGFGLRGA. A helical transmembrane segment spans residues 241 to 266; that stretch reads ATLTILLGIFFVCWGPFFLHLMLVVL. Residues 267-279 lie on the Extracellular side of the membrane; sequence CPQHLTCSCIFKN. A helical membrane pass occupies residues 280 to 300; it reads FKVFLTLIICNTIIDPLIYAF. Over 301-317 the chain is Cytoplasmic; that stretch reads RSQELCRTLKEVLLCSW. Residue cysteine 315 is the site of S-palmitoyl cysteine attachment.

It belongs to the G-protein coupled receptor 1 family. As to quaternary structure, interacts with MGRN1, but does not undergo MGRN1-mediated ubiquitination; this interaction competes with GNAS-binding and thus inhibits agonist-induced cAMP production. Interacts with OPN3; the interaction results in a decrease in MC1R-mediated cAMP signaling and ultimately a decrease in melanin production in melanocytes.

The protein localises to the cell membrane. Its function is as follows. Receptor for MSH (alpha, beta and gamma) and ACTH. The activity of this receptor is mediated by G proteins which activate adenylate cyclase. Mediates melanogenesis, the production of eumelanin (black/brown) and phaeomelanin (red/yellow), via regulation of cAMP signaling in melanocytes. The polypeptide is Melanocyte-stimulating hormone receptor (MC1R) (Alouatta sara (Bolivian red howler monkey)).